A 379-amino-acid polypeptide reads, in one-letter code: MDNLANQGVIVLAAGGTGGHLFPAEALAHELRARGWDVHLATDARAQRFVGAFAQDHVHVIRSATIAGRNPVALLKTFWSLWQGNLDSRKLFRRLKPKLVVGFGGYPTLPPLYAASNMGIPTLIHEQNAVMGRANKGLAGRVKAIAGGFLPENSGAYAAKTVITGNPVRPPVLVAAATPYTPAGKDDRFRLLVFGGSQGAQFFSQAIPAAVALLPEHERARLLITQQARKEDEASARQAYEKLGVPADVAPFFNDMPARMADAHFVIARSGASTVSEITVIGRPAMLVPFPHALDHDQAANAAALAAAGGAEVVRQADLSPQRLAEMLQSAMNEPERLEQQAKAAKSVGKPDAARLLADLAEAIVSGKTVQEFKEGNRP.

Residues 17–19, Asn128, Arg169, Ser197, and Gln298 each bind UDP-N-acetyl-alpha-D-glucosamine; that span reads TGG.

Belongs to the glycosyltransferase 28 family. MurG subfamily.

Its subcellular location is the cell inner membrane. It carries out the reaction di-trans,octa-cis-undecaprenyl diphospho-N-acetyl-alpha-D-muramoyl-L-alanyl-D-glutamyl-meso-2,6-diaminopimeloyl-D-alanyl-D-alanine + UDP-N-acetyl-alpha-D-glucosamine = di-trans,octa-cis-undecaprenyl diphospho-[N-acetyl-alpha-D-glucosaminyl-(1-&gt;4)]-N-acetyl-alpha-D-muramoyl-L-alanyl-D-glutamyl-meso-2,6-diaminopimeloyl-D-alanyl-D-alanine + UDP + H(+). The protein operates within cell wall biogenesis; peptidoglycan biosynthesis. Its function is as follows. Cell wall formation. Catalyzes the transfer of a GlcNAc subunit on undecaprenyl-pyrophosphoryl-MurNAc-pentapeptide (lipid intermediate I) to form undecaprenyl-pyrophosphoryl-MurNAc-(pentapeptide)GlcNAc (lipid intermediate II). The polypeptide is UDP-N-acetylglucosamine--N-acetylmuramyl-(pentapeptide) pyrophosphoryl-undecaprenol N-acetylglucosamine transferase (Brucella suis biovar 1 (strain 1330)).